The sequence spans 591 residues: Aspartate--tRNA(Asp/Asn) ligase (591 aa).

Residue glutamate 176 participates in L-aspartate binding. The tract at residues 200-203 is aspartate; sequence QLFK. Residue arginine 222 participates in L-aspartate binding. ATP-binding positions include 222–224 and glutamine 231; that span reads RDE. Histidine 450 contributes to the L-aspartate binding site. Glutamate 484 is a binding site for ATP. Arginine 491 contributes to the L-aspartate binding site. Position 536 to 539 (536 to 539) interacts with ATP; that stretch reads GLDR.

Belongs to the class-II aminoacyl-tRNA synthetase family. Type 1 subfamily. As to quaternary structure, homodimer.

The protein localises to the cytoplasm. It catalyses the reaction tRNA(Asx) + L-aspartate + ATP = L-aspartyl-tRNA(Asx) + AMP + diphosphate. Functionally, aspartyl-tRNA synthetase with relaxed tRNA specificity since it is able to aspartylate not only its cognate tRNA(Asp) but also tRNA(Asn). Reaction proceeds in two steps: L-aspartate is first activated by ATP to form Asp-AMP and then transferred to the acceptor end of tRNA(Asp/Asn). This is Aspartate--tRNA(Asp/Asn) ligase from Bacillus cereus (strain ATCC 10987 / NRS 248).